The chain runs to 433 residues: DNA methyltransferase 1-associated protein 1 (433 aa).

The segment at 1 to 204 (MSADVRDILD…EVVALLAKAK (204 aa)) is required for nuclear localization. The Myb-like domain maps to 148–197 (NNWSKVQTDHLFDLARRFDLRFIVMADRWNRQQHGTKTVEELKERYYEVV). A coiled-coil region spans residues 186–281 (VEELKERYYE…ADQQNEHASN (96 aa)). A compositionally biased stretch (basic and acidic residues) spans 252 to 264 (EARKKERERKTQD). Positions 252–305 (EARKKERERKTQDLQKLISQADQQNEHASNTPSTRKYEKKLHKKKVHQQPRPSR) are disordered. The span at 268–285 (LISQADQQNEHASNTPST) shows a compositional bias: polar residues. Positions 288 to 299 (YEKKLHKKKVHQ) are enriched in basic residues.

In terms of assembly, interacts with Rel. Interacts with akirin and Bap55.

The protein resides in the nucleus. The protein localises to the cytoplasm. In terms of biological role, involved in transcription repression and activation. Required for larvae and pupal development, and for normal innate immune responses. Involved in modulating the activation of the immune deficiency pathway (Imd), acting either downstream of, or at the level of, the NF-kappa-B factor Rel. Possibly functions with akirin to regulate Rel, and its interaction with the Brahma complex protein Bap55 suggests that it may regulate the IMD pathway at the level of chromatin remodeling. The protein is DNA methyltransferase 1-associated protein 1 of Drosophila melanogaster (Fruit fly).